Consider the following 286-residue polypeptide: Translocon-associated protein subunit alpha (286 aa).

A signal peptide spans 1–20 (MSSLRRLLLLLLLVFPATLL). Residues 21–207 (LRVGPGGSLA…EREDGLDGET (187 aa)) lie on the Lumenal side of the membrane. Residues 37 to 75 (EDEETVEDSIIEDEDDEAEVEEDEPTDLAEDKEEDDVSG) are compositionally biased toward acidic residues. Residues 37–83 (EDEETVEDSIIEDEDDEAEVEEDEPTDLAEDKEEDDVSGEPEASPSA) form a disordered region. N-linked (GlcNAc...) asparagine glycans are attached at residues Asn-136 and Asn-191. Residues 208–228 (IFMYMFLAGLGLLVVVGLHQL) traverse the membrane as a helical segment. At 229–286 (LESRKRKRPIQKVEMGTSSQNDVDMSWIPQETLNQINKASPRRLPRKRAQKRSVGSDE) the chain is on the cytoplasmic side. Ser-247 carries the phosphoserine modification. At Thr-260 the chain carries Phosphothreonine. The segment at 261–286 (LNQINKASPRRLPRKRAQKRSVGSDE) is disordered. Residue Ser-268 is modified to Phosphoserine. Positions 268–279 (SPRRLPRKRAQK) are enriched in basic residues.

Belongs to the TRAP-alpha family. In terms of assembly, heterotetramer of TRAP-alpha, TRAP-beta, TRAP-delta and TRAP-gamma. Interacts with palmitoylated calnexin (CALX), the interaction is required for efficient folding of glycosylated proteins. Post-translationally, phosphorylated in its cytoplasmic tail.

The protein resides in the endoplasmic reticulum membrane. TRAP proteins are part of a complex whose function is to bind calcium to the ER membrane and thereby regulate the retention of ER resident proteins. May be involved in the recycling of the translocation apparatus after completion of the translocation process or may function as a membrane-bound chaperone facilitating folding of translocated proteins. The protein is Translocon-associated protein subunit alpha (SSR1) of Bos taurus (Bovine).